Here is a 433-residue protein sequence, read N- to C-terminus: MSKLLMIGTGPVAIQLANICYLKSDYEIDMVGRASTSEKSKRLYQAYKKEKQFEVKIQNEAHQHLEGKFEINRLYKDVKNVKGEYETVVMACTADAYYDTLQQLSLETLQSVKHVILISPTFGSQMIVEQFMSKFSQDIEVISFSTYLGDTRIVDKEAPNHVLTTGVKKKLYMGSTHSNSTMCQRISALAEQLKIQLEVVESPLHAETRNSSLYVHPPLFMNDFSLKAIFEGTDVPVYVYKLFPEGPITMTLIREMRLMWKEMMAILQAFRVPSVNLLQFMVKENYPVRPETLDEGDIEHFEILPDILQEYLLYVRYTAILIDPFSQPDENGHYFDFSAVPFKQVYKNEQDVVQIPRMPSEDYYRTAMIQHIGKMLGIKTPMIDQFLTRYEASCQAYKDMHQDQQLSSQFNTNLFEGDKALVTKFLEINRTLS.

NADP(+) is bound by residues 9–12 (TGPV), arginine 33, 37–40 (SEKS), and aspartate 99. Histidine 216 functions as the Proton donor/acceptor in the catalytic mechanism.

This sequence belongs to the staphylopine dehydrogenase family. Homodimer.

The catalysed reaction is staphylopine + NADP(+) + H2O = (2S)-2-amino-4-{[(1R)-1-carboxy-2-(1H-imidazol-4-yl)ethyl]amino}butanoate + pyruvate + NADPH + H(+). Catalyzes the NADPH-dependent reductive condensation of pyruvate to the intermediate formed by the adjacently encoded enzyme CntL, namely (2S)-2-amino-4-{[(1R)-1-carboxy-2-(1H-imidazol-4-yl)ethyl]amino}butanoate, leading to the production of staphylopine. This is the last step in the biosynthesis of the metallophore staphylopine, which is involved in the acquisition of nickel, cobalt, zinc, copper, and iron, and thus enables bacterial growth inside the host, where metal access is limited. Therefore, this enzyme probably contributes to staphylococcal virulence. Can use neither NADH nor alpha-ketoglutarate in place of NADPH and pyruvate, respectively. The sequence is that of Staphylopine synthase from Staphylococcus aureus (strain Mu50 / ATCC 700699).